Reading from the N-terminus, the 388-residue chain is Glucose-1-phosphate adenylyltransferase (388 aa).

Residues Tyr100, Gly165, 180–181 (EK), and Ser191 each bind alpha-D-glucose 1-phosphate.

This sequence belongs to the bacterial/plant glucose-1-phosphate adenylyltransferase family. As to quaternary structure, homotetramer.

The catalysed reaction is alpha-D-glucose 1-phosphate + ATP + H(+) = ADP-alpha-D-glucose + diphosphate. It participates in glycan biosynthesis; glycogen biosynthesis. Its function is as follows. Involved in the biosynthesis of ADP-glucose, a building block required for the elongation reactions to produce glycogen. Catalyzes the reaction between ATP and alpha-D-glucose 1-phosphate (G1P) to produce pyrophosphate and ADP-Glc. This chain is Glucose-1-phosphate adenylyltransferase, found in Clostridium perfringens (strain SM101 / Type A).